Consider the following 118-residue polypeptide: Small ribosomal subunit protein uS13 (118 aa).

Positions 92-118 (RRSLPVRGQRTKTNARTRKGPRKPIKK) are disordered.

It belongs to the universal ribosomal protein uS13 family. In terms of assembly, part of the 30S ribosomal subunit. Forms a loose heterodimer with protein S19. Forms two bridges to the 50S subunit in the 70S ribosome.

Functionally, located at the top of the head of the 30S subunit, it contacts several helices of the 16S rRNA. In the 70S ribosome it contacts the 23S rRNA (bridge B1a) and protein L5 of the 50S subunit (bridge B1b), connecting the 2 subunits; these bridges are implicated in subunit movement. Contacts the tRNAs in the A and P-sites. This chain is Small ribosomal subunit protein uS13, found in Acinetobacter baylyi (strain ATCC 33305 / BD413 / ADP1).